Consider the following 246-residue polypeptide: Pyridoxine 5'-phosphate synthase (246 aa).

N8 and R19 together coordinate 3-amino-2-oxopropyl phosphate. H44 acts as the Proton acceptor in catalysis. 1-deoxy-D-xylulose 5-phosphate is bound by residues R46 and H51. E76 functions as the Proton acceptor in the catalytic mechanism. T106 lines the 1-deoxy-D-xylulose 5-phosphate pocket. The Proton donor role is filled by H198. Residues D199 and 221–222 (GH) contribute to the 3-amino-2-oxopropyl phosphate site.

Belongs to the PNP synthase family. As to quaternary structure, homooctamer; tetramer of dimers.

It localises to the cytoplasm. The enzyme catalyses 3-amino-2-oxopropyl phosphate + 1-deoxy-D-xylulose 5-phosphate = pyridoxine 5'-phosphate + phosphate + 2 H2O + H(+). It participates in cofactor biosynthesis; pyridoxine 5'-phosphate biosynthesis; pyridoxine 5'-phosphate from D-erythrose 4-phosphate: step 5/5. In terms of biological role, catalyzes the complicated ring closure reaction between the two acyclic compounds 1-deoxy-D-xylulose-5-phosphate (DXP) and 3-amino-2-oxopropyl phosphate (1-amino-acetone-3-phosphate or AAP) to form pyridoxine 5'-phosphate (PNP) and inorganic phosphate. In Brucella suis (strain ATCC 23445 / NCTC 10510), this protein is Pyridoxine 5'-phosphate synthase.